The chain runs to 466 residues: Cysteine--tRNA ligase (466 aa).

Cysteine 28 lines the Zn(2+) pocket. A 'HIGH' region motif is present at residues proline 30–asparagine 40. Positions 208, 233, and 237 each coordinate Zn(2+). A 'KMSKS' region motif is present at residues lysine 265–serine 269. Residue lysine 268 participates in ATP binding.

The protein belongs to the class-I aminoacyl-tRNA synthetase family. Monomer. It depends on Zn(2+) as a cofactor.

It localises to the cytoplasm. It carries out the reaction tRNA(Cys) + L-cysteine + ATP = L-cysteinyl-tRNA(Cys) + AMP + diphosphate. In Staphylococcus carnosus (strain TM300), this protein is Cysteine--tRNA ligase.